A 412-amino-acid chain; its full sequence is Major facilitator superfamily domain-containing protein 3 (412 aa).

Helical transmembrane passes span 10 to 30 (GLYL…PILL), 40 to 60 (VGLT…APLV), 68 to 88 (VWLT…AVLP), 99 to 119 (TTVM…DVAL), 152 to 172 (GGLL…LLAA), 173 to 193 (TYWL…LPWP), 204 to 224 (YLLQ…FVLT), 252 to 272 (LWSG…GGAL), 291 to 311 (LGSL…GASV), 320 to 340 (AVLL…TATF), 361 to 381 (FLAT…GVLA), and 384 to 404 (LGPH…VLDL).

Belongs to the major facilitator superfamily. As to expression, in brain, expressed in the cortex, striatum, hippocampus, hypothalamus, thalamus and cerebellum (at protein level). Widely expressed with highest levels in kidney and liver.

It is found in the membrane. This Mus musculus (Mouse) protein is Major facilitator superfamily domain-containing protein 3 (Mfsd3).